Consider the following 612-residue polypeptide: Pentatricopeptide repeat-containing protein At4g14050, mitochondrial (612 aa).

A mitochondrion-targeting transit peptide spans 1-24 (MLIPHYLHQLQLCARNRTLTTAKA). 11 PPR repeats span residues 37 to 71 (CCPLANTLVNVYGKCGAASHALQVFDEMPHRDHIA), 72 to 103 (WASVLTALNQANLSGKTLSVFSSVGSSSGLRP), 104 to 138 (DDFVFSALVKACANLGSIDHGRQVHCHFIVSEYAN), 139 to 169 (DEVVKSSLVDMYAKCGLLNSAKAVFDSIRVK), 170 to 204 (NTISWTAMVSGYAKSGRKEEALELFRILPVKNLYS), 205 to 235 (WTALISGFVQSGKGLEAFSVFTEMRRERVDI), 237 to 271 (DPLVLSSIVGACANLAASIAGRQVHGLVIALGFDS), 272 to 302 (CVFISNALIDMYAKCSDVIAAKDIFSRMRHR), 303 to 337 (DVVSWTSLIVGMAQHGQAEKALALYDDMVSHGVKP), 338 to 373 (NEVTFVGLIYACSHVGFVEKGRELFQSMTKDYGIRP), and 374 to 408 (SLQHYTCLLDLLGRSGLLDEAENLIHTMPFPPDEP). The type E motif stretch occupies residues 409 to 485 (TWAALLSACK…DPGHSSVEVR (77 aa)). Positions 486–516 (KETEVFYAGETSHPLKEDIFRLLKKLEEEMR) are type E(+) motif. The type DYW motif stretch occupies residues 518–612 (RNGYVPDTSW…GGKCSCNDFW (95 aa)).

The protein belongs to the PPR family. PCMP-H subfamily. In terms of assembly, interacts with MORF8/RIP1 and MORF1/RIP8.

The protein localises to the mitochondrion. In terms of biological role, involved in C-to-U editing of mitochondrial RNA. Required specifically for editing the mitochondrial NAD4, MT-CYB/COB and RPL16 transcripts. This Arabidopsis thaliana (Mouse-ear cress) protein is Pentatricopeptide repeat-containing protein At4g14050, mitochondrial (PCMP-H13).